A 329-amino-acid polypeptide reads, in one-letter code: Protein RecA (329 aa).

63-70 (GNESSGKT) provides a ligand contact to ATP.

The protein belongs to the RecA family.

The protein localises to the cytoplasm. In terms of biological role, can catalyze the hydrolysis of ATP in the presence of single-stranded DNA, the ATP-dependent uptake of single-stranded DNA by duplex DNA, and the ATP-dependent hybridization of homologous single-stranded DNAs. It interacts with LexA causing its activation and leading to its autocatalytic cleavage. This chain is Protein RecA, found in Malacoplasma penetrans (strain HF-2) (Mycoplasma penetrans).